The chain runs to 384 residues: MFDLNTCLRKNILELQPYRCARDDFSEGVLLDANECAYGSVISVDGVEFNRYPDPRQIEVKQRLCDLRNKELSITKPLTPDNICMGVGSDEIIDSLIRISCIPGKDKILMCPPSYGMYTVSAKINDVEVVKVLLEPDFNLNVDAICETLSKDSAIKVFFACSPGNPTAKALKLEDIKKILEHPTWNGIVVVDEAYIDFSAPDMSALTLVNEYPNLAVCQTLSKSFGLAGIRIGFCLTSKPIATIMNSLKAPYNISEPTSRLALDALSPQSIDKMHTYRDAIIQQRVRLCKELTTIKGMGKIIGGYDANFILIQVLDRPEGGKPSNDAAKYLYLQMATMHKVVVRFRGTEPLCEGALRITVGTEEENTILLKTIKLVLQEYYTKK.

N6-(pyridoxal phosphate)lysine is present on lysine 223.

This sequence belongs to the class-II pyridoxal-phosphate-dependent aminotransferase family. Requires pyridoxal 5'-phosphate as cofactor.

The enzyme catalyses L-histidinol phosphate + 2-oxoglutarate = 3-(imidazol-4-yl)-2-oxopropyl phosphate + L-glutamate. It functions in the pathway amino-acid biosynthesis; L-histidine biosynthesis; L-histidine from 5-phospho-alpha-D-ribose 1-diphosphate: step 7/9. This is Histidinol-phosphate aminotransferase (his3) from Schizosaccharomyces pombe (strain 972 / ATCC 24843) (Fission yeast).